Reading from the N-terminus, the 525-residue chain is ATP synthase subunit alpha (525 aa).

Residue 171-178 (GDRQTGKS) participates in ATP binding.

The protein belongs to the ATPase alpha/beta chains family. F-type ATPases have 2 components, CF(1) - the catalytic core - and CF(0) - the membrane proton channel. CF(1) has five subunits: alpha(3), beta(3), gamma(1), delta(1), epsilon(1). CF(0) has three main subunits: a(1), b(2) and c(9-12). The alpha and beta chains form an alternating ring which encloses part of the gamma chain. CF(1) is attached to CF(0) by a central stalk formed by the gamma and epsilon chains, while a peripheral stalk is formed by the delta and b chains.

The protein resides in the cell inner membrane. The enzyme catalyses ATP + H2O + 4 H(+)(in) = ADP + phosphate + 5 H(+)(out). In terms of biological role, produces ATP from ADP in the presence of a proton gradient across the membrane. The alpha chain is a regulatory subunit. The sequence is that of ATP synthase subunit alpha from Flavobacterium johnsoniae (strain ATCC 17061 / DSM 2064 / JCM 8514 / BCRC 14874 / CCUG 350202 / NBRC 14942 / NCIMB 11054 / UW101) (Cytophaga johnsonae).